Consider the following 785-residue polypeptide: Hyperosmolality-gated Ca2+ permeable channel 1.7 (785 aa).

Residues 7 to 27 (IGLSAAINLLSAFAFLFAFAM) form a helical membrane-spanning segment. Phosphoserine is present on Ser-54. A run of 9 helical transmembrane segments spans residues 101–121 (IYLLGLKMFVPITLLAFGVLV), 156–176 (FWAHITMTYVITFWTCYILYM), 373–393 (LLTTVALFFLIFCFMIPIAFV), 425–445 (FLPGIALKIFLIILPTILMTM), 465–485 (YFWFIIVNVFLGSIITGTAFQ), 510–530 (ATFFITYIMVDGWAGIAAEIL), 582–602 (AVAPILLPFIIVFFAFAYVVF), 628–648 (LIICLIISQLLMMGLLSTKKF), and 651–671 (VTALLLPQPILTFWFYRYCAG). The disordered stretch occupies residues 725–761 (VDEEESNPLVRTKRTSQGTTRYNSEASSSATTTPVAN). Over residues 739–761 (TSQGTTRYNSEASSSATTTPVAN) the composition is skewed to polar residues.

Belongs to the CSC1 (TC 1.A.17) family. In terms of processing, phosphorylated and activated by BIK1.

The protein resides in the membrane. The enzyme catalyses Ca(2+)(in) = Ca(2+)(out). Its function is as follows. Calcium-permeable channel involved in plant stomatal immunity. In Arabidopsis thaliana (Mouse-ear cress), this protein is Hyperosmolality-gated Ca2+ permeable channel 1.7.